We begin with the raw amino-acid sequence, 249 residues long: Deoxyribose-phosphate aldolase (249 aa).

The active-site Proton donor/acceptor is the D94. The active-site Schiff-base intermediate with acetaldehyde is the K158. K200 (proton donor/acceptor) is an active-site residue.

The protein belongs to the DeoC/FbaB aldolase family. DeoC type 1 subfamily.

It localises to the cytoplasm. It carries out the reaction 2-deoxy-D-ribose 5-phosphate = D-glyceraldehyde 3-phosphate + acetaldehyde. Its pathway is carbohydrate degradation; 2-deoxy-D-ribose 1-phosphate degradation; D-glyceraldehyde 3-phosphate and acetaldehyde from 2-deoxy-alpha-D-ribose 1-phosphate: step 2/2. Functionally, catalyzes a reversible aldol reaction between acetaldehyde and D-glyceraldehyde 3-phosphate to generate 2-deoxy-D-ribose 5-phosphate. The polypeptide is Deoxyribose-phosphate aldolase (Thermoplasma volcanium (strain ATCC 51530 / DSM 4299 / JCM 9571 / NBRC 15438 / GSS1)).